Here is a 124-residue protein sequence, read N- to C-terminus: uncharacterized protein (124 aa).

It localises to the cytoplasm. Its subcellular location is the nucleus. This is an uncharacterized protein from Schizosaccharomyces pombe (strain 972 / ATCC 24843) (Fission yeast).